The chain runs to 161 residues: MTIEKPKISVAFICLGNFCRSPMAEAIFKHEVEKANLENRFNKIDSFGTSNYHVGESPDHRTVSICKQHGVKINHKGKQIKTKHFDEYDYIIGMDESNINNLKKIQPEGSKAKVCLFGDWNTNDGTVQTIIEDPWYGDIQDFEYNFKQITYFSKQFLKKEL.

Cys-14 serves as the catalytic Nucleophile. The Transition state stabilizer role is filled by Arg-20. Ser-57 is subject to Phosphoserine. Catalysis depends on Asp-133, which acts as the Proton donor.

Belongs to the low molecular weight phosphotyrosine protein phosphatase family.

The protein resides in the cytoplasm. The enzyme catalyses O-phospho-L-tyrosyl-[protein] + H2O = L-tyrosyl-[protein] + phosphate. The catalysed reaction is a phosphate monoester + H2O = an alcohol + phosphate. Functionally, acts on tyrosine phosphorylated proteins, low-MW aryl phosphates and natural and synthetic acyl phosphates. In Saccharomyces cerevisiae (strain ATCC 204508 / S288c) (Baker's yeast), this protein is Low molecular weight phosphotyrosine protein phosphatase.